A 264-amino-acid chain; its full sequence is Tritrans,polycis-undecaprenyl-diphosphate synthase (geranylgeranyl-diphosphate specific) (264 aa).

Asp-43 is an active-site residue. Asp-43 is a binding site for Mg(2+). Substrate is bound by residues 44-47 (GNRR), Trp-48, His-60, and 88-90 (STE). Asn-91 functions as the Proton acceptor in the catalytic mechanism. Residues Phe-92, Arg-94, Arg-213, and 219–221 (RIS) contribute to the substrate site. Glu-232 is a binding site for Mg(2+).

The protein belongs to the UPP synthase family. As to quaternary structure, homodimer. Mg(2+) is required as a cofactor.

The enzyme catalyses geranylgeranyl diphosphate + 7 isopentenyl diphosphate = tri-trans,hepta-cis-undecaprenyl diphosphate + 7 diphosphate. Its function is as follows. Catalyzes the sequential condensation of isopentenyl diphosphate (IPP) with geranylgeranyl diphosphate (GGPP) to yield (2Z,6Z,10Z,14Z,18Z,22Z,26Z,30E,34E,38E)-undecaprenyl diphosphate (tritrans,heptacis-UPP). It is probably the precursor of glycosyl carrier lipids. The polypeptide is Tritrans,polycis-undecaprenyl-diphosphate synthase (geranylgeranyl-diphosphate specific) (Thermococcus kodakarensis (strain ATCC BAA-918 / JCM 12380 / KOD1) (Pyrococcus kodakaraensis (strain KOD1))).